Consider the following 269-residue polypeptide: Small ribosomal subunit protein uS2 (269 aa).

A disordered region spans residues 228–269 (ARAERQAAAAKDAAGDTGKSEADAEAVKAEAAAEEKAETTEA). Over residues 233-244 (QAAAAKDAAGDT) the composition is skewed to low complexity. Basic and acidic residues predominate over residues 245-269 (GKSEADAEAVKAEAAAEEKAETTEA).

The protein belongs to the universal ribosomal protein uS2 family.

This Corynebacterium urealyticum (strain ATCC 43042 / DSM 7109) protein is Small ribosomal subunit protein uS2.